The chain runs to 157 residues: Peptide methionine sulfoxide reductase MsrA (157 aa).

C10 is an active-site residue.

The protein belongs to the MsrA Met sulfoxide reductase family.

The enzyme catalyses L-methionyl-[protein] + [thioredoxin]-disulfide + H2O = L-methionyl-(S)-S-oxide-[protein] + [thioredoxin]-dithiol. The catalysed reaction is [thioredoxin]-disulfide + L-methionine + H2O = L-methionine (S)-S-oxide + [thioredoxin]-dithiol. Functionally, has an important function as a repair enzyme for proteins that have been inactivated by oxidation. Catalyzes the reversible oxidation-reduction of methionine sulfoxide in proteins to methionine. This Clostridium botulinum (strain Okra / Type B1) protein is Peptide methionine sulfoxide reductase MsrA.